We begin with the raw amino-acid sequence, 236 residues long: MEKLDLLYEGKAKRVYKTDDPRYYIIEYKDEATAFDGKKKGIIQGKGTVNNKVSAVFFQLLEENGVPTHFVELLSPTEMLVKRVEIIPLEVIVRNYAAGSISRRLGLEEGIKFDQPIVEFCYKNDELGDPMVNNYHILAMKLANEEEINALTQQALRINQILSQFLLGKNIILVDFKLEFGRTDEGDIVLADEISPDTCRFWDSATMEKLDKDRFRRDMGGVEEAYMEIARRLGCV.

The protein belongs to the SAICAR synthetase family.

The enzyme catalyses 5-amino-1-(5-phospho-D-ribosyl)imidazole-4-carboxylate + L-aspartate + ATP = (2S)-2-[5-amino-1-(5-phospho-beta-D-ribosyl)imidazole-4-carboxamido]succinate + ADP + phosphate + 2 H(+). It participates in purine metabolism; IMP biosynthesis via de novo pathway; 5-amino-1-(5-phospho-D-ribosyl)imidazole-4-carboxamide from 5-amino-1-(5-phospho-D-ribosyl)imidazole-4-carboxylate: step 1/2. The polypeptide is Phosphoribosylaminoimidazole-succinocarboxamide synthase (Coprothermobacter proteolyticus (strain ATCC 35245 / DSM 5265 / OCM 4 / BT)).